The primary structure comprises 190 residues: GTP cyclohydrolase 1 1 (190 aa).

Belongs to the GTP cyclohydrolase I family. As to quaternary structure, homomer.

The enzyme catalyses GTP + H2O = 7,8-dihydroneopterin 3'-triphosphate + formate + H(+). Its pathway is cofactor biosynthesis; 7,8-dihydroneopterin triphosphate biosynthesis; 7,8-dihydroneopterin triphosphate from GTP: step 1/1. The chain is GTP cyclohydrolase 1 1 from Pseudomonas putida (strain ATCC 47054 / DSM 6125 / CFBP 8728 / NCIMB 11950 / KT2440).